The chain runs to 334 residues: GTP 3',8-cyclase (334 aa).

One can recognise a Radical SAM core domain in the interval 8 to 244; the sequence is RYGRPLRDLR…GEVAQRHAFA (237 aa). Arginine 17 is a binding site for GTP. Positions 24 and 28 each coordinate [4Fe-4S] cluster. Tyrosine 30 provides a ligand contact to S-adenosyl-L-methionine. Cysteine 31 serves as a coordination point for [4Fe-4S] cluster. Arginine 70 is a binding site for GTP. Glycine 74 lines the S-adenosyl-L-methionine pocket. Threonine 101 is a binding site for GTP. Serine 125 provides a ligand contact to S-adenosyl-L-methionine. Lysine 163 is a binding site for GTP. Residue methionine 197 participates in S-adenosyl-L-methionine binding. [4Fe-4S] cluster is bound by residues cysteine 261 and cysteine 264. 266-268 contacts GTP; sequence RAR. Cysteine 278 is a [4Fe-4S] cluster binding site.

It belongs to the radical SAM superfamily. MoaA family. In terms of assembly, monomer and homodimer. The cofactor is [4Fe-4S] cluster.

The catalysed reaction is GTP + AH2 + S-adenosyl-L-methionine = (8S)-3',8-cyclo-7,8-dihydroguanosine 5'-triphosphate + 5'-deoxyadenosine + L-methionine + A + H(+). The protein operates within cofactor biosynthesis; molybdopterin biosynthesis. In terms of biological role, catalyzes the cyclization of GTP to (8S)-3',8-cyclo-7,8-dihydroguanosine 5'-triphosphate. The protein is GTP 3',8-cyclase of Xanthomonas axonopodis pv. citri (strain 306).